Here is a 187-residue protein sequence, read N- to C-terminus: Elongation factor P (187 aa).

This sequence belongs to the elongation factor P family.

The protein resides in the cytoplasm. It functions in the pathway protein biosynthesis; polypeptide chain elongation. In terms of biological role, involved in peptide bond synthesis. Stimulates efficient translation and peptide-bond synthesis on native or reconstituted 70S ribosomes in vitro. Probably functions indirectly by altering the affinity of the ribosome for aminoacyl-tRNA, thus increasing their reactivity as acceptors for peptidyl transferase. The chain is Elongation factor P from Chelativorans sp. (strain BNC1).